The sequence spans 250 residues: DNA repair protein RecO (250 aa).

Belongs to the RecO family.

Its function is as follows. Involved in DNA repair and RecF pathway recombination. In Staphylococcus aureus (strain MW2), this protein is DNA repair protein RecO.